The primary structure comprises 301 residues: Pyridoxal 5'-phosphate synthase subunit PdxS (301 aa).

Position 31 (Asp31) interacts with D-ribose 5-phosphate. The active-site Schiff-base intermediate with D-ribose 5-phosphate is Lys88. D-ribose 5-phosphate is bound at residue Gly160. Lys172 is a binding site for D-glyceraldehyde 3-phosphate. D-ribose 5-phosphate is bound by residues Gly221 and 242–243; that span reads GS.

The protein belongs to the PdxS/SNZ family. As to quaternary structure, in the presence of PdxT, forms a dodecamer of heterodimers.

It catalyses the reaction aldehydo-D-ribose 5-phosphate + D-glyceraldehyde 3-phosphate + L-glutamine = pyridoxal 5'-phosphate + L-glutamate + phosphate + 3 H2O + H(+). The protein operates within cofactor biosynthesis; pyridoxal 5'-phosphate biosynthesis. In terms of biological role, catalyzes the formation of pyridoxal 5'-phosphate from ribose 5-phosphate (RBP), glyceraldehyde 3-phosphate (G3P) and ammonia. The ammonia is provided by the PdxT subunit. Can also use ribulose 5-phosphate and dihydroxyacetone phosphate as substrates, resulting from enzyme-catalyzed isomerization of RBP and G3P, respectively. This Methanosarcina mazei (strain ATCC BAA-159 / DSM 3647 / Goe1 / Go1 / JCM 11833 / OCM 88) (Methanosarcina frisia) protein is Pyridoxal 5'-phosphate synthase subunit PdxS.